A 367-amino-acid chain; its full sequence is 3-dehydroquinate synthase (367 aa).

Residues 108–112 (GVIGD), 132–133 (TT), Lys145, and Lys154 each bind NAD(+). The Zn(2+) site is built by Glu187, His249, and His267.

It belongs to the sugar phosphate cyclases superfamily. Dehydroquinate synthase family. Co(2+) serves as cofactor. The cofactor is Zn(2+). Requires NAD(+) as cofactor.

Its subcellular location is the cytoplasm. It catalyses the reaction 7-phospho-2-dehydro-3-deoxy-D-arabino-heptonate = 3-dehydroquinate + phosphate. It functions in the pathway metabolic intermediate biosynthesis; chorismate biosynthesis; chorismate from D-erythrose 4-phosphate and phosphoenolpyruvate: step 2/7. Catalyzes the conversion of 3-deoxy-D-arabino-heptulosonate 7-phosphate (DAHP) to dehydroquinate (DHQ). The chain is 3-dehydroquinate synthase from Paracoccus denitrificans (strain Pd 1222).